A 170-amino-acid chain; its full sequence is Myosin regulatory light chain 2 (170 aa).

Positions 1-13 (MSKAAKKKSSKKR) are enriched in basic residues. The tract at residues 1-22 (MSKAAKKKSSKKRSGSEAAQFD) is disordered. 2 EF-hand domains span residues 24 to 59 (KTIQ…MGQI) and 93 to 128 (DPEA…KRGE). Positions 37, 39, 41, and 48 each coordinate Ca(2+).

As to quaternary structure, myosin is a hexamer of 2 heavy chains and 4 light chains (two regulatory light chains and two essential light chains).

This chain is Myosin regulatory light chain 2 (mlc-2), found in Caenorhabditis elegans.